A 281-amino-acid chain; its full sequence is Aquaporin-9 (281 aa).

Over 1–17 (MGAFVNTKVYIENKNIR) the chain is Cytoplasmic. The helical transmembrane segment at 18-36 (DWLSEALSMFMYMSLLLGS) threads the bilayer. The Extracellular portion of the chain corresponds to 37–50 (AATGHFSGREDDAL). The chain crosses the membrane as a helical span at residues 51 to 69 (FGVIFQGFSITFGIYIGGA). Residues 70-71 (MS) are Cytoplasmic-facing. The segment at residues 72 to 84 (GAIINPALTLAVA) is an intramembrane region (discontinuously helical). The short motif at 76-78 (NPA) is the NPA 1 element. The Cytoplasmic portion of the chain corresponds to 85 to 90 (LLGKIS). The helical transmembrane segment at 91-115 (WRKCIVLQSAQYIGSFIASAVVYLI) threads the bilayer. At 116–157 (YNDSLDAFGAGANFTATEPGVFRKDVAGIWSTFPKTYLKERG) the chain is on the extracellular side. N117 and N128 each carry an N-linked (GlcNAc...) asparagine glycan. A helical transmembrane segment spans residues 158-175 (AIFNQIFCSMLLTFGFLA). Residues 176-187 (ISDYKNFRPSKG) are Cytoplasmic-facing. Residues 188-204 (LFPIAVGLLVMTVFLAF) form a helical membrane-spanning segment. The Extracellular portion of the chain corresponds to 205-207 (SYS). The segment at residues 208-222 (TGAAMNPARDFSPRL) is an intramembrane region (discontinuously helical). The NPA 2 signature appears at 213–215 (NPA). Residues 223–241 (WSLIIGYGIEVFSYNQYEW) lie on the Extracellular side of the membrane. A helical transmembrane segment spans residues 242 to 262 (FWIPWLMPYVGAMLGALIYQL). Topologically, residues 263–281 (LIGAQWSKGQKGESKHKDP) are cytoplasmic.

The protein belongs to the MIP/aquaporin (TC 1.A.8) family.

Its subcellular location is the cell membrane. The catalysed reaction is H2O(in) = H2O(out). Its function is as follows. Aquaglyceroporin that may modulate the water content and osmolytes during anhydrobiosis. This Milnesium tardigradum (Water bear) protein is Aquaporin-9.